A 277-amino-acid chain; its full sequence is Secoisolariciresinol dehydrogenase (277 aa).

NAD(+)-binding positions include 24-29 (GGASGI), aspartate 48, valine 73, and asparagine 99. Serine 163 contributes to the substrate binding site. The Proton donor/acceptor role is filled by tyrosine 166. Lysine 170 lines the NAD(+) pocket.

It belongs to the short-chain dehydrogenases/reductases (SDR) family. As to quaternary structure, homotetramer.

The catalysed reaction is (-)-secoisolariciresinol + 2 NAD(+) = (-)-matairesinol + 2 NADH + 2 H(+). In terms of biological role, oxidoreductase involved in lignan biosynthesis. Catalyzes the stereospecific conversion of (-)-secoisolariciresinol to (-)-matairesinol via a lactol intermediate. This is Secoisolariciresinol dehydrogenase from Forsythia intermedia (Border forsythia).